The sequence spans 342 residues: RNA 3'-terminal phosphate cyclase (342 aa).

ATP-binding positions include Q102 and 283–287 (HLADQ). H308 functions as the Tele-AMP-histidine intermediate in the catalytic mechanism.

It belongs to the RNA 3'-terminal cyclase family. Type 1 subfamily.

It localises to the cytoplasm. The enzyme catalyses a 3'-end 3'-phospho-ribonucleotide-RNA + ATP = a 3'-end 2',3'-cyclophospho-ribonucleotide-RNA + AMP + diphosphate. In terms of biological role, catalyzes the conversion of 3'-phosphate to a 2',3'-cyclic phosphodiester at the end of RNA. The mechanism of action of the enzyme occurs in 3 steps: (A) adenylation of the enzyme by ATP; (B) transfer of adenylate to an RNA-N3'P to produce RNA-N3'PP5'A; (C) and attack of the adjacent 2'-hydroxyl on the 3'-phosphorus in the diester linkage to produce the cyclic end product. The biological role of this enzyme is unknown but it is likely to function in some aspects of cellular RNA processing. The chain is RNA 3'-terminal phosphate cyclase from Pseudomonas fluorescens (strain ATCC BAA-477 / NRRL B-23932 / Pf-5).